Here is a 485-residue protein sequence, read N- to C-terminus: MSLFDLKLKDVHTKLHEKEISVSDLVDEAYKRIEQVDGQVEAFLALNEEKARAYAKELDAALDRSEARGLLFGIPIGVKDNIVTKNLRTTCSSRILGNFDPIYDATVVHKLREAQAVTIGKLNMDEFAMGSSTENSAFQKTKNPWNLEYVPGGSSGGSAAAVAAGEVPFTLGSDTGGSIRQPAAYCGVVGLKPTYGRVSRYGLVAFASSLDQIGPITRNVEDNAYLLQAISGHDPMDSTSANLDVPDYLSALTGDIKGLKIAVPKEYLGEGVKEEVKQSVLDALKVLEGLGATWEEVSLPHSKYALATYYLLASSEASANLARFDGVRYGFRSDNADNLLDMYKQTRAEGFGDEVKRRIMLGTFALSSGYYDAYYKKAQQVRTLIKQDFEKVFEQYDVIIGPTTPTPAFKIGEKTDDPLTMYANDILTIPVNLAGVPAISVPCGFDNGLPLGLQIIGKHFDEGSVYRVAHAFEQATDYHTKRPTL.

Catalysis depends on charge relay system residues lysine 79 and serine 154. The active-site Acyl-ester intermediate is the serine 178.

It belongs to the amidase family. GatA subfamily. As to quaternary structure, heterotrimer of A, B and C subunits.

The catalysed reaction is L-glutamyl-tRNA(Gln) + L-glutamine + ATP + H2O = L-glutaminyl-tRNA(Gln) + L-glutamate + ADP + phosphate + H(+). In terms of biological role, allows the formation of correctly charged Gln-tRNA(Gln) through the transamidation of misacylated Glu-tRNA(Gln) in organisms which lack glutaminyl-tRNA synthetase. The reaction takes place in the presence of glutamine and ATP through an activated gamma-phospho-Glu-tRNA(Gln). The chain is Glutamyl-tRNA(Gln) amidotransferase subunit A (gatA) from Halalkalibacterium halodurans (strain ATCC BAA-125 / DSM 18197 / FERM 7344 / JCM 9153 / C-125) (Bacillus halodurans).